Reading from the N-terminus, the 206-residue chain is uncharacterized protein (206 aa).

Helical transmembrane passes span 9 to 29 (ILSL…SVLT), 47 to 67 (LGVV…LAFL), 74 to 94 (FFVI…INTI), and 150 to 170 (IAVI…FYAF).

Belongs to the Rht family.

It is found in the cell membrane. This is an uncharacterized protein from Synechocystis sp. (strain ATCC 27184 / PCC 6803 / Kazusa).